The sequence spans 183 residues: Oligoribonuclease (183 aa).

In terms of domain architecture, Exonuclease spans 9 to 172; sequence LIWIDLEMTG…DDIRESIEEL (164 aa). Tyr130 is a catalytic residue.

The protein belongs to the oligoribonuclease family.

Its subcellular location is the cytoplasm. Functionally, 3'-to-5' exoribonuclease specific for small oligoribonucleotides. The chain is Oligoribonuclease from Haemophilus ducreyi (strain 35000HP / ATCC 700724).